The chain runs to 84 residues: MHGTCLSGLYPVPFTHNAHHYPHFDIYISFGGPKYCITALNTYVIPLLHHILTTPFIYTYVNITEKSPQKSPKHKNILLFNNNT.

This sequence belongs to the UPF0320 family.

This chain is Putative UPF0320 protein YAL068W-A, found in Saccharomyces cerevisiae (strain ATCC 204508 / S288c) (Baker's yeast).